The chain runs to 381 residues: Flap endonuclease 1 (381 aa).

An N-domain region spans residues 1-105 (MGIKGLNSII…HELDKRTSRR (105 aa)). Residue D34 coordinates Mg(2+). DNA contacts are provided by R47 and R71. Mg(2+)-binding residues include D87, E156, E158, D177, and D179. The I-domain stretch occupies residues 120 to 251 (EKMKHERRLV…VTALKLMKEH (132 aa)). E156 serves as a coordination point for DNA. Positions 229 and 231 each coordinate DNA. D231 serves as a coordination point for Mg(2+). An interaction with PCNA region spans residues 338-346 (VQGRLDGFF).

The protein belongs to the XPG/RAD2 endonuclease family. FEN1 subfamily. Interacts with PCNA. Three molecules of FEN1 bind to one PCNA trimer with each molecule binding to one PCNA monomer. PCNA stimulates the nuclease activity without altering cleavage specificity. Requires Mg(2+) as cofactor. Phosphorylated. Phosphorylation upon DNA damage induces relocalization to the nuclear plasma.

The protein localises to the nucleus. It localises to the nucleolus. The protein resides in the nucleoplasm. It is found in the mitochondrion. Functionally, structure-specific nuclease with 5'-flap endonuclease and 5'-3' exonuclease activities involved in DNA replication and repair. During DNA replication, cleaves the 5'-overhanging flap structure that is generated by displacement synthesis when DNA polymerase encounters the 5'-end of a downstream Okazaki fragment. It enters the flap from the 5'-end and then tracks to cleave the flap base, leaving a nick for ligation. Also involved in the long patch base excision repair (LP-BER) pathway, by cleaving within the apurinic/apyrimidinic (AP) site-terminated flap. Acts as a genome stabilization factor that prevents flaps from equilibrating into structures that lead to duplications and deletions. Also possesses 5'-3' exonuclease activity on nicked or gapped double-stranded DNA, and exhibits RNase H activity. Also involved in replication and repair of rDNA and in repairing mitochondrial DNA. The protein is Flap endonuclease 1 of Candida glabrata (strain ATCC 2001 / BCRC 20586 / JCM 3761 / NBRC 0622 / NRRL Y-65 / CBS 138) (Yeast).